The chain runs to 362 residues: 3-dehydroquinate synthase (362 aa).

Residues 70-75 (EGEQYK), 104-108 (GVIGD), 128-129 (TT), lysine 141, lysine 150, and 168-171 (TLTT) each bind NAD(+). The Zn(2+) site is built by glutamate 183, histidine 246, and histidine 263.

The protein belongs to the sugar phosphate cyclases superfamily. Dehydroquinate synthase family. Requires Co(2+) as cofactor. Zn(2+) serves as cofactor. It depends on NAD(+) as a cofactor.

It localises to the cytoplasm. The enzyme catalyses 7-phospho-2-dehydro-3-deoxy-D-arabino-heptonate = 3-dehydroquinate + phosphate. It participates in metabolic intermediate biosynthesis; chorismate biosynthesis; chorismate from D-erythrose 4-phosphate and phosphoenolpyruvate: step 2/7. Its function is as follows. Catalyzes the conversion of 3-deoxy-D-arabino-heptulosonate 7-phosphate (DAHP) to dehydroquinate (DHQ). This Histophilus somni (strain 2336) (Haemophilus somnus) protein is 3-dehydroquinate synthase.